Reading from the N-terminus, the 275-residue chain is uncharacterized protein (275 aa).

Residues 20–22 (RAQ), 41–42 (DI), 80–81 (DI), and asparagine 107 each bind NAD(+). Serine 160 contacts substrate. Tyrosine 173 (proton acceptor) is an active-site residue. NAD(+)-binding positions include lysine 177 and 206-208 (VDT).

The protein belongs to the short-chain dehydrogenases/reductases (SDR) family.

This is an uncharacterized protein from Mycobacterium tuberculosis (strain CDC 1551 / Oshkosh).